The following is a 610-amino-acid chain: Methionine--tRNA ligase (610 aa).

The short motif at 12 to 22 (PYANGPRHIGH) is the 'HIGH' region element. 4 residues coordinate Zn(2+): cysteine 144, cysteine 147, cysteine 157, and cysteine 160. A 'KMSKS' region motif is present at residues 348-352 (KFSSS). Residue serine 351 coordinates ATP.

Belongs to the class-I aminoacyl-tRNA synthetase family. MetG type 1 subfamily. As to quaternary structure, monomer. It depends on Zn(2+) as a cofactor.

The protein resides in the cytoplasm. It catalyses the reaction tRNA(Met) + L-methionine + ATP = L-methionyl-tRNA(Met) + AMP + diphosphate. Functionally, is required not only for elongation of protein synthesis but also for the initiation of all mRNA translation through initiator tRNA(fMet) aminoacylation. The chain is Methionine--tRNA ligase from Corynebacterium diphtheriae (strain ATCC 700971 / NCTC 13129 / Biotype gravis).